We begin with the raw amino-acid sequence, 370 residues long: Dual-specificity RNA methyltransferase RlmN (370 aa).

The active-site Proton acceptor is glutamate 93. Positions 99-337 constitute a Radical SAM core domain; that stretch reads EEGRGTLCVS…VTTVRKTRGD (239 aa). A disulfide bridge connects residues cysteine 106 and cysteine 343. Residues cysteine 113, cysteine 117, and cysteine 120 each contribute to the [4Fe-4S] cluster site. S-adenosyl-L-methionine is bound by residues 167 to 168, serine 199, 221 to 223, and asparagine 300; these read GE and SLH. Cysteine 343 acts as the S-methylcysteine intermediate in catalysis.

It belongs to the radical SAM superfamily. RlmN family. [4Fe-4S] cluster serves as cofactor.

It is found in the cytoplasm. The catalysed reaction is adenosine(2503) in 23S rRNA + 2 reduced [2Fe-2S]-[ferredoxin] + 2 S-adenosyl-L-methionine = 2-methyladenosine(2503) in 23S rRNA + 5'-deoxyadenosine + L-methionine + 2 oxidized [2Fe-2S]-[ferredoxin] + S-adenosyl-L-homocysteine. It carries out the reaction adenosine(37) in tRNA + 2 reduced [2Fe-2S]-[ferredoxin] + 2 S-adenosyl-L-methionine = 2-methyladenosine(37) in tRNA + 5'-deoxyadenosine + L-methionine + 2 oxidized [2Fe-2S]-[ferredoxin] + S-adenosyl-L-homocysteine. Its function is as follows. Specifically methylates position 2 of adenine 2503 in 23S rRNA and position 2 of adenine 37 in tRNAs. m2A2503 modification seems to play a crucial role in the proofreading step occurring at the peptidyl transferase center and thus would serve to optimize ribosomal fidelity. The sequence is that of Dual-specificity RNA methyltransferase RlmN from Francisella tularensis subsp. holarctica (strain FTNF002-00 / FTA).